The following is a 1818-amino-acid chain: Integrin beta-4 (1818 aa).

The N-terminal stretch at 1-28 is a signal peptide; it reads MAGPCCSPWVKLLLLAAMLSASLPGDLA. Over 29-712 the chain is Extracellular; that stretch reads NRCKKAQVKS…HKKKDCPPGS (684 aa). The PSI domain occupies 30 to 74; it reads RCKKAQVKSCTECIRVDKSCAYCTDELFKERRCNTQAELLAAGCR. 8 cysteine pairs are disulfide-bonded: Cys31-Cys49, Cys39-Cys457, Cys42-Cys62, Cys52-Cys73, Cys246-Cys289, Cys459-Cys478, Cys470-Cys481, and Cys483-Cys492. The region spanning 132–310 is the VWFA domain; it reads DLYILMDFSN…KTQDYPSVPT (179 aa). Residues Ser140 and Ser142 each coordinate Mg(2+). Ser142, Asp145, Asp146, and Asp177 together coordinate Ca(2+). The interval 195 to 200 is involved in NRG1- and IGF1-binding; that stretch reads WPNSDP. The Ca(2+) site is built by Asn229, Asp231, Pro233, and Glu234. Glu234 provides a ligand contact to Mg(2+). The N-linked (GlcNAc...) asparagine glycan is linked to Asn328. Residue Glu351 coordinates Ca(2+). I-EGF domains follow at residues 459-493, 494-539, 540-576, and 577-617; these read CELQ…KTCN, CSTG…HFCE, YDNF…RSCD, and CPLS…TTCE. A Cell attachment site motif is present at residues 473 to 475; the sequence is RGD. N-linked (GlcNAc...) asparagine glycosylation is present at Asn493. 11 cysteine pairs are disulfide-bonded: Cys494–Cys522, Cys505–Cys520, Cys514–Cys525, Cys527–Cys538, Cys545–Cys559, Cys553–Cys564, Cys566–Cys575, Cys577–Cys600, Cys584–Cys598, Cys592–Cys603, and Cys605–Cys616. Residue Asn581 is glycosylated (N-linked (GlcNAc...) asparagine). Asn619 carries an N-linked (GlcNAc...) asparagine glycan. Cystine bridges form between Cys628–Cys673, Cys634–Cys653, Cys637–Cys650, and Cys682–Cys708. Asn697 is a glycosylation site (N-linked (GlcNAc...) asparagine). The helical transmembrane segment at 713–733 threads the bilayer; that stretch reads FWWLIPLLIFLLLLLALLLLL. The interval 734-751 is palmitoylated on several cysteines; it reads CWKYCACCKACLGLLPCC. The Cytoplasmic segment spans residues 734-1818; it reads CWKYCACCKA…THMDQQFFQT (1085 aa). Ser773 is subject to Phosphoserine. The region spanning 981-1086 is the Calx-beta domain; sequence VNITIIKEQA…QVRRFQVQLS (106 aa). The Cell attachment site motif lies at 1005 to 1007; that stretch reads RGD. Ser1071 and Ser1121 each carry phosphoserine. Positions 1115-1137 are disordered; the sequence is INQTLSSPPPPHGDLGAPQNPNA. Fibronectin type-III domains are found at residues 1131 to 1220 and 1224 to 1323; these read APQN…THQE and EPGR…TQPK. Residues 1402–1433 form a disordered region; it reads LSASSGRSDEDGSVAGGVEGEGSGWIRGATPR. Gly residues predominate over residues 1415 to 1426; sequence VAGGVEGEGSGW. A phosphoserine mark is found at Ser1451, Ser1454, and Ser1470. Residue Thr1483 is modified to Phosphothreonine. Ser1490 is modified (phosphoserine). Position 1526 is a phosphothreonine (Thr1526). Fibronectin type-III domains lie at 1526–1621 and 1639–1735; these read TPTR…VHPQ and APGP…SQVG. Phosphoserine is present on Ser1787.

This sequence belongs to the integrin beta chain family. Heterodimer of an alpha and a beta subunit. Beta-4 associates with alpha-6. Interacts (via cytoplasmic region) with COL17A1 (via cytoplasmic region). Interacts (via cytoplasmic region) with DST isoform 3 (via N-terminus). Interacts (via cytoplasmic domain) with DST (via N-terminus). Interacts with RAC1. ITGA6:ITGB4 is found in a ternary complex with NRG1 and ERBB3. ITGA6:ITGB4 is found in a ternary complex with IGF1 and IGF1R. ITGA6:ITGB4 interacts with IGF2. Interacts with TMEM268; this interaction prevents ITGB4 degradation. Palmitoylated by DHHC3 at several cysteines of the membrane-proximal region, enhancing stability and cell surface expression. Palmitoylation also promotes secondary association with tertaspanins.

It is found in the cell membrane. The protein resides in the cell junction. It localises to the hemidesmosome. Its function is as follows. Integrin alpha-6/beta-4 is a receptor for laminin. It plays a critical structural role in the hemidesmosome of epithelial cells. Is required for the regulation of keratinocyte polarity and motility. ITGA6:ITGB4 binds to NRG1 (via EGF domain) and this binding is essential for NRG1-ERBB signaling. ITGA6:ITGB4 binds to IGF1 and this binding is essential for IGF1 signaling. ITGA6:ITGB4 binds to IGF2 and this binding is essential for IGF2 signaling. The polypeptide is Integrin beta-4 (Itgb4) (Mus musculus (Mouse)).